A 184-amino-acid chain; its full sequence is NADH-quinone oxidoreductase subunit B (184 aa).

[4Fe-4S] cluster-binding residues include C63, C64, C128, and C158.

The protein belongs to the complex I 20 kDa subunit family. NDH-1 is composed of 14 different subunits. Subunits NuoB, C, D, E, F, and G constitute the peripheral sector of the complex. [4Fe-4S] cluster is required as a cofactor.

It localises to the cell inner membrane. It catalyses the reaction a quinone + NADH + 5 H(+)(in) = a quinol + NAD(+) + 4 H(+)(out). Its function is as follows. NDH-1 shuttles electrons from NADH, via FMN and iron-sulfur (Fe-S) centers, to quinones in the respiratory chain. Couples the redox reaction to proton translocation (for every two electrons transferred, four hydrogen ions are translocated across the cytoplasmic membrane), and thus conserves the redox energy in a proton gradient. This chain is NADH-quinone oxidoreductase subunit B, found in Xylella fastidiosa (strain 9a5c).